The sequence spans 384 residues: Tryptophan--tRNA ligase (384 aa).

The 'HIGH' region motif lies at 81-89; it reads PSGPMHIGH. A 'KMSKS' region motif is present at residues 252–256; it reads KMSAS.

Belongs to the class-I aminoacyl-tRNA synthetase family.

The protein resides in the cytoplasm. The enzyme catalyses tRNA(Trp) + L-tryptophan + ATP = L-tryptophyl-tRNA(Trp) + AMP + diphosphate + H(+). This Thermococcus sibiricus (strain DSM 12597 / MM 739) protein is Tryptophan--tRNA ligase.